The following is a 213-amino-acid chain: Protein ORF D (213 aa).

The protein is Protein ORF D of Elephas maximus (Indian elephant).